We begin with the raw amino-acid sequence, 338 residues long: MRIGIVNDSALAVAALRRALALDTTLEIAWIAGDGEEAVRMAATQTPDLILMDLLMPVMDGVEATRRIMAESPCAIVVVTMDLGRNANQVFDAMGHGAIDAVDTPTLTDSDTKLAAGPLLRKIRNIARLLGGRGQAPHPLAAATPTPTAPRLVAIGASAGGPAALATLLGALPADFGAAVVAVQHVDEAFAQGMAEWLDAQCQLPVRLARAGEVPQAGAVVLAGTNDHLRLTSAGRLIYTPDPCDYLYRPSIDVFFESVVEHWRGEAIGVLLTGMGRDGAQGLKAMRERGFQTIAQDQATSAVYGMPKAAATLGAASEILPLQKIAPRLVMTCGGGRR.

A Response regulatory domain is found at 2 to 119; it reads RIGIVNDSAL…SDTKLAAGPL (118 aa). Aspartate 53 carries the 4-aspartylphosphate modification. One can recognise a CheB-type methylesterase domain in the interval 145 to 330; the sequence is PTPTAPRLVA…PLQKIAPRLV (186 aa). Catalysis depends on residues serine 158, histidine 185, and aspartate 278.

Belongs to the CheB family. In terms of processing, phosphorylated by CheA. Phosphorylation of the N-terminal regulatory domain activates the methylesterase activity.

It localises to the cytoplasm. The catalysed reaction is [protein]-L-glutamate 5-O-methyl ester + H2O = L-glutamyl-[protein] + methanol + H(+). The enzyme catalyses L-glutaminyl-[protein] + H2O = L-glutamyl-[protein] + NH4(+). Its function is as follows. Involved in chemotaxis. Part of a chemotaxis signal transduction system that modulates chemotaxis in response to various stimuli. Catalyzes the demethylation of specific methylglutamate residues introduced into the chemoreceptors (methyl-accepting chemotaxis proteins or MCP) by CheR. Also mediates the irreversible deamidation of specific glutamine residues to glutamic acid. In Cupriavidus metallidurans (strain ATCC 43123 / DSM 2839 / NBRC 102507 / CH34) (Ralstonia metallidurans), this protein is Protein-glutamate methylesterase/protein-glutamine glutaminase 2.